We begin with the raw amino-acid sequence, 418 residues long: Intracellular coagulation inhibitor 1 (418 aa).

An N-terminal signal peptide occupies residues 1-24; that stretch reads MKLGDWKFCLLLFQLMFLTNVCLS. N-linked (GlcNAc...) asparagine glycans are attached at residues asparagine 49 and asparagine 404.

It belongs to the serpin family. In terms of assembly, monomer. Forms a covalent heterodimer with clotting factor C. Interacts with big defensin. Post-translationally, N-glycosylated. In terms of tissue distribution, expressed in hemocytes (at protein level).

Its subcellular location is the secreted. Functionally, serine protease inhibitor that specifically inhibits clotting factor C. Does not inhibit clotting factor B or proclotting enzyme. The sequence is that of Intracellular coagulation inhibitor 1 from Tachypleus tridentatus (Japanese horseshoe crab).